The following is a 264-amino-acid chain: 5'-nucleotidase SurE (264 aa).

D10, D11, S43, and N99 together coordinate a divalent metal cation.

Belongs to the SurE nucleotidase family. Requires a divalent metal cation as cofactor.

The protein resides in the cytoplasm. It catalyses the reaction a ribonucleoside 5'-phosphate + H2O = a ribonucleoside + phosphate. Functionally, nucleotidase that shows phosphatase activity on nucleoside 5'-monophosphates. The chain is 5'-nucleotidase SurE from Methanococcus maripaludis (strain C5 / ATCC BAA-1333).